The following is a 119-amino-acid chain: Protein ELF4-LIKE 2 (119 aa).

The disordered stretch occupies residues 91–119; it reads SVDASSEGESTGTLKSDGKANNQKRFRSG. The segment covering 93-111 has biased composition (polar residues); it reads DASSEGESTGTLKSDGKAN.

This sequence belongs to the EARLY FLOWERING 4 family. In terms of assembly, homodimer.

The protein localises to the nucleus. In terms of biological role, component of the central CCA1/LHY-TOC1 feedback loop in the circadian clock that promotes clock accuracy and is required for sustained rhythms in the absence of daily light/dark cycles. This chain is Protein ELF4-LIKE 2 (EFL2), found in Arabidopsis thaliana (Mouse-ear cress).